A 154-amino-acid polypeptide reads, in one-letter code: Protein X (154 aa).

Residues 68–117 are mitochondrial targeting sequence; sequence PCALRFTSARRMETTVNAHRNLPKVLHKRTLGLSAMSTTDLEAHFKDCVF.

It belongs to the orthohepadnavirus protein X family. As to quaternary structure, may form homodimer. May interact with host CEBPA, CFLAR, CREB1, DDB1, E4F1, HBXIP, HSPD1/HSP60, NFKBIA, POLR2E and SMAD4. Interacts with host SMC5-SMC6 complex and induces its degradation. Interacts with host TRPC4AP; leading to prevent ubiquitination of TRPC4AP. Interacts with host PLSCR1; this interaction promotes ubiquitination and degradation of HBx and impairs HBx-mediated cell proliferation. A fraction may be phosphorylated in insect cells and HepG2 cells, a human hepatoblastoma cell line. Phosphorylated in vitro by host protein kinase C or mitogen-activated protein kinase. N-acetylated in insect cells.

Its subcellular location is the host cytoplasm. The protein localises to the host nucleus. It localises to the host mitochondrion. Multifunctional protein that plays a role in silencing host antiviral defenses and promoting viral transcription. Does not seem to be essential for HBV infection. May be directly involved in development of cirrhosis and liver cancer (hepatocellular carcinoma). Most of cytosolic activities involve modulation of cytosolic calcium. The effect on apoptosis is controversial depending on the cell types in which the studies have been conducted. May induce apoptosis by localizing in mitochondria and causing loss of mitochondrial membrane potential. May also modulate apoptosis by binding host CFLAR, a key regulator of the death-inducing signaling complex (DISC). Promotes viral transcription by using the host E3 ubiquitin ligase DDB1 to target the SMC5-SMC6 complex to proteasomal degradation. This host complex would otherwise bind to viral episomal DNA, and prevents its transcription. Moderately stimulates transcription of many different viral and cellular transcription elements. Promoters and enhancers stimulated by HBx contain DNA binding sites for NF-kappa-B, AP-1, AP-2, c-EBP, ATF/CREB, or the calcium-activated factor NF-AT. The sequence is that of Protein X from Hepatitis B virus genotype B2 (isolate Indonesia/pIDW420/1988) (HBV-B).